We begin with the raw amino-acid sequence, 255 residues long: Microfibril-associated glycoprotein 4 (255 aa).

An N-terminal signal peptide occupies residues 1–20 (MEALLVLPLLLLLSAGPCAP). Residues 26–28 (RGD) carry the Cell attachment site motif. Positions 32–255 (KSCLQLPLDC…KRTEMKIRRA (224 aa)) constitute a Fibrinogen C-terminal domain. N-linked (GlcNAc...) asparagine glycans are attached at residues N87 and N137.

As to quaternary structure, homodimer. Can also form higher oligomers. Interacts with FBN1, FBN2 and LOX. Interacts with COL1A1 in a Ca (2+)-dependent manner. Interacts with ELN in a Ca (2+)-dependent manner; this interaction promotes ELN self-assembly.

Its subcellular location is the secreted. The protein resides in the extracellular space. It localises to the extracellular matrix. Functionally, could be involved in calcium-dependent cell adhesion or intercellular interactions. May contribute to the elastic fiber assembly and/or maintenance. The chain is Microfibril-associated glycoprotein 4 (MFAP4) from Bos taurus (Bovine).